We begin with the raw amino-acid sequence, 475 residues long: tRNA-2-methylthio-N(6)-dimethylallyladenosine synthase (475 aa).

Residues 3-120 enclose the MTTase N-terminal domain; that stretch reads KKLHIKTWGC…LPEMIDQIRA (118 aa). [4Fe-4S] cluster is bound by residues Cys12, Cys49, Cys83, Cys157, Cys161, and Cys164. Residues 143 to 375 form the Radical SAM core domain; it reads RADGPSAFVS…QDRITQQAMR (233 aa). The region spanning 378–441 is the TRAM domain; the sequence is RQMVGTVQRI…TNSLRGVFIR (64 aa).

Belongs to the methylthiotransferase family. MiaB subfamily. In terms of assembly, monomer. Requires [4Fe-4S] cluster as cofactor.

It is found in the cytoplasm. It catalyses the reaction N(6)-dimethylallyladenosine(37) in tRNA + (sulfur carrier)-SH + AH2 + 2 S-adenosyl-L-methionine = 2-methylsulfanyl-N(6)-dimethylallyladenosine(37) in tRNA + (sulfur carrier)-H + 5'-deoxyadenosine + L-methionine + A + S-adenosyl-L-homocysteine + 2 H(+). Catalyzes the methylthiolation of N6-(dimethylallyl)adenosine (i(6)A), leading to the formation of 2-methylthio-N6-(dimethylallyl)adenosine (ms(2)i(6)A) at position 37 in tRNAs that read codons beginning with uridine. This is tRNA-2-methylthio-N(6)-dimethylallyladenosine synthase from Shewanella halifaxensis (strain HAW-EB4).